Here is a 604-residue protein sequence, read N- to C-terminus: Serine/threonine-protein phosphatase 2B catalytic subunit A2 (604 aa).

The interval 21–48 is disordered; it reads NKTERPQSSTTPIDSKASTVAAANSTAT. Position 31 is a phosphothreonine (Thr-31). A compositionally biased stretch (low complexity) spans 35–48; sequence SKASTVAAANSTAT. Residues Asp-144, His-146, and Asp-172 each contribute to the Fe cation site. Asp-172 and Asn-204 together coordinate Zn(2+). Catalysis depends on His-205, which acts as the Proton donor. Zn(2+) is bound by residues His-253 and His-359. Positions 470-497 are disordered; it reads KKLPQAGKSEATPQPATSASPKHASILD. Residues 480–489 are compositionally biased toward polar residues; sequence ATPQPATSAS. Residues Ser-489 and Ser-520 each carry the phosphoserine modification. The tract at residues 501–523 is calmodulin-binding; it reads RRKALRNKILAVAKVSRMYSVLR.

This sequence belongs to the PPP phosphatase family. PP-2B subfamily. In terms of assembly, composed of two components (A and B), the A component is the catalytic subunit and the B component confers calcium sensitivity. Fe(3+) serves as cofactor. Zn(2+) is required as a cofactor.

The enzyme catalyses O-phospho-L-seryl-[protein] + H2O = L-seryl-[protein] + phosphate. The catalysed reaction is O-phospho-L-threonyl-[protein] + H2O = L-threonyl-[protein] + phosphate. Functionally, calcium-dependent, calmodulin-stimulated protein phosphatase. This subunit may have a role in the calmodulin activation of calcineurin. This Saccharomyces cerevisiae (strain ATCC 204508 / S288c) (Baker's yeast) protein is Serine/threonine-protein phosphatase 2B catalytic subunit A2 (CMP2).